We begin with the raw amino-acid sequence, 203 residues long: Glycerol-3-phosphate acyltransferase (203 aa).

Transmembrane regions (helical) follow at residues 2-22 (LATLMFILAYLLGSISSAILV), 54-74 (CLVLIFDVLKGTIPVWGAYFL), 80-100 (ALGLVAVAACLGHMFPLFFGF), 114-134 (LPIGLSLAGLLICTWFIMVAI), and 153-173 (TWLIKPLYTLPVTFITVLIIF).

It belongs to the PlsY family. In terms of assembly, probably interacts with PlsX.

The protein localises to the cell inner membrane. The catalysed reaction is an acyl phosphate + sn-glycerol 3-phosphate = a 1-acyl-sn-glycero-3-phosphate + phosphate. Its pathway is lipid metabolism; phospholipid metabolism. Catalyzes the transfer of an acyl group from acyl-phosphate (acyl-PO(4)) to glycerol-3-phosphate (G3P) to form lysophosphatidic acid (LPA). This enzyme utilizes acyl-phosphate as fatty acyl donor, but not acyl-CoA or acyl-ACP. This is Glycerol-3-phosphate acyltransferase from Pseudoalteromonas translucida (strain TAC 125).